Reading from the N-terminus, the 456-residue chain is PTS system sucrose-specific EIIBC component (456 aa).

In terms of domain architecture, PTS EIIB type-1 spans 4–87 (EQISCSLLPL…TQAAGISESS (84 aa)). Cysteine 26 (phosphocysteine intermediate; for EIIB activity) is an active-site residue. The PTS EIIC type-1 domain maps to 107 to 456 (RLLSNIFVPI…LVLKYKTDAE (350 aa)). The next 10 helical transmembrane spans lie at 112-132 (IFVPIIPAIVASGLLMGLLGM), 144-164 (AIYIMLDMCSSAAFIILPILI), 181-201 (TLGGILTHPALTNAWGVAAGF), 213-233 (MIGYQGTVFPVLLAVWFMSIV), 247-267 (LILTPFLTVIISGFIALLIIG), 288-308 (AGWLAGLLFGGLYSVIVITGI), 329-349 (FLLPIWAMANVAQGGACLAVW), 360-380 (ITLPSAFSAMLGITEAAIFGI), 388-408 (FIAALIGGAAGGAWVVSVHVY), and 428-448 (LLNYIIGMVIAFGVAFTVSLV).

It localises to the cell inner membrane. The enzyme catalyses N(pros)-phospho-L-histidyl-[protein](out) + sucrose = sucrose 6(G)-phosphate(in) + L-histidyl-[protein]. In terms of biological role, the phosphoenolpyruvate-dependent sugar phosphotransferase system (sugar PTS), a major carbohydrate active transport system, catalyzes the phosphorylation of incoming sugar substrates concomitantly with their translocation across the cell membrane. This system is involved in sucrose transport. The polypeptide is PTS system sucrose-specific EIIBC component (Salmonella typhimurium).